Here is a 701-residue protein sequence, read N- to C-terminus: Probable cytosolic oligopeptidase A (701 aa).

Ala2 carries the post-translational modification N-acetylalanine. A coiled-coil region spans residues 148 to 194; the sequence is IALEDDKREEFNKIEQELEKLSHKFSENVLDATKKFEKLITDKKEIE. Zn(2+) is bound at residue His483. Glu484 is an active-site residue. The Zn(2+) site is built by His487 and Glu513. 615–621 serves as a coordination point for substrate; the sequence is HIFAGGY.

The protein belongs to the peptidase M3 family. It depends on Zn(2+) as a cofactor.

Its subcellular location is the cytoplasm. It is found in the cytosol. It carries out the reaction Hydrolysis of oligopeptides, with broad specificity. Gly or Ala commonly occur as P1 or P1' residues, but more distant residues are also important, as is shown by the fact that Z-Gly-Pro-Gly-|-Gly-Pro-Ala is cleaved, but not Z-(Gly)(5).. With respect to regulation, inhibited by salicylic acid. In terms of biological role, oligopeptidase that may be involved in the degradation of proteasome-generated peptides. Binds salicylic acid. This is Probable cytosolic oligopeptidase A from Arabidopsis thaliana (Mouse-ear cress).